Consider the following 104-residue polypeptide: ATP-dependent Clp protease adapter protein ClpS (104 aa).

This sequence belongs to the ClpS family. As to quaternary structure, binds to the N-terminal domain of the chaperone ClpA.

Its function is as follows. Involved in the modulation of the specificity of the ClpAP-mediated ATP-dependent protein degradation. The polypeptide is ATP-dependent Clp protease adapter protein ClpS (Burkholderia mallei (strain NCTC 10247)).